The sequence spans 487 residues: NADH-quinone oxidoreductase subunit N (487 aa).

The next 13 helical transmembrane spans lie at L7–T27, L37–L57, F81–F101, P112–I132, F166–F186, A207–F227, G237–L257, I276–T296, I307–A327, L329–L349, L373–F393, D407–I427, and V452–L472.

This sequence belongs to the complex I subunit 2 family. As to quaternary structure, NDH-1 is composed of 14 different subunits. Subunits NuoA, H, J, K, L, M, N constitute the membrane sector of the complex.

Its subcellular location is the cell inner membrane. The catalysed reaction is a quinone + NADH + 5 H(+)(in) = a quinol + NAD(+) + 4 H(+)(out). NDH-1 shuttles electrons from NADH, via FMN and iron-sulfur (Fe-S) centers, to quinones in the respiratory chain. The immediate electron acceptor for the enzyme in this species is believed to be ubiquinone. Couples the redox reaction to proton translocation (for every two electrons transferred, four hydrogen ions are translocated across the cytoplasmic membrane), and thus conserves the redox energy in a proton gradient. The protein is NADH-quinone oxidoreductase subunit N of Erythrobacter litoralis (strain HTCC2594).